A 491-amino-acid chain; its full sequence is Cytosolic Fe-S cluster assembly factor NAR1 (491 aa).

Residues Cys-20, Cys-59, Cys-62, Cys-65, Cys-177, Cys-231, Cys-412, and Cys-416 each coordinate [4Fe-4S] cluster.

It belongs to the NARF family. In terms of assembly, interacts with CIA1.

Functionally, component of the cytosolic Fe/S protein assembly machinery. Required for maturation of extramitochondrial Fe/S proteins. May play a role in the transfer of pre-assembled Fe/S clusters to target apoproteins. This chain is Cytosolic Fe-S cluster assembly factor NAR1 (NAR1), found in Saccharomyces cerevisiae (strain YJM789) (Baker's yeast).